A 236-amino-acid polypeptide reads, in one-letter code: Conserved regulator of innate immunity protein 3 (236 aa).

Residues 1–36 (MNTASLVRSLSRVALRSSQVVRMAAPRHFSQSAKVL) constitute a mitochondrion transit peptide.

This sequence belongs to the MAM33 family.

The protein localises to the mitochondrion matrix. The chain is Conserved regulator of innate immunity protein 3 (cri-3) from Caenorhabditis elegans.